Reading from the N-terminus, the 145-residue chain is FAD synthase (145 aa).

ATP contacts are provided by residues 5–6, 10–13, Asp92, and Tyr119; these read TF and HPGH.

It belongs to the archaeal FAD synthase family. In terms of assembly, homodimer. Requires a divalent metal cation as cofactor.

The enzyme catalyses FMN + ATP + H(+) = FAD + diphosphate. It functions in the pathway cofactor biosynthesis; FAD biosynthesis; FAD from FMN: step 1/1. Functionally, catalyzes the transfer of the AMP portion of ATP to flavin mononucleotide (FMN) to produce flavin adenine dinucleotide (FAD) coenzyme. The polypeptide is FAD synthase (Methanothermus fervidus (strain ATCC 43054 / DSM 2088 / JCM 10308 / V24 S)).